The chain runs to 109 residues: Large ribosomal subunit protein uL23 (109 aa).

Belongs to the universal ribosomal protein uL23 family. Part of the 50S ribosomal subunit. Contacts protein L29, and trigger factor when it is bound to the ribosome.

Its function is as follows. One of the early assembly proteins it binds 23S rRNA. One of the proteins that surrounds the polypeptide exit tunnel on the outside of the ribosome. Forms the main docking site for trigger factor binding to the ribosome. This is Large ribosomal subunit protein uL23 from Aquifex pyrophilus.